The primary structure comprises 102 residues: MSSPPEGKLETKAGHPPAVKAGGMRIVQKHPHTGDTKEEKDKDDQEWESPSPPKPTVFISGVIARGDKDFPPAAAQVAHQKPHASMDKHPSPRTQHIQQPRK.

The segment at 1 to 102 (MSSPPEGKLE…RTQHIQQPRK (102 aa)) is disordered. Residue S2 is modified to N-acetylserine. Position 3 is a phosphoserine; by MTOR (S3). Residue K29 is modified to N6-acetyllysine. A compositionally biased stretch (basic and acidic residues) spans 32–43 (HTGDTKEEKDKD). A Phosphoserine modification is found at S49. S51 carries the phosphoserine; by MTOR modification. S91 is subject to Phosphoserine. The segment covering 92–102 (PRTQHIQQPRK) has biased composition (polar residues).

This sequence belongs to the DAP-DAPL1 family. Associates with ribosomes; inhibiting translation. Interacts with eiF5a (EIF5A and EIF5A2); inhibiting translation. Post-translationally, phosphorylated. Phosphorylation by MTOR inhibits the suppressive activity of DAP toward autophagy.

Functionally, ribosome-binding protein involved in ribosome hibernation, a process during which ribosomes are stabilized in an inactive state and preserved from proteasomal degradation. Acts via its association with eiF5a (EIF5A and EIF5A2) at the polypeptide exit tunnel of the ribosome, preventing mRNA translation. Involved in ribosome hibernation in the mature oocyte by preventing mRNA translation, leading to ribosome inactivation. Ribosomes, which are produced in large quantities during oogenesis, are stored and translationally repressed in the oocyte and early embryo. Also acts as a negative regulator of autophagy. Involved in mediating interferon-gamma-induced cell death. This chain is Death-associated protein 1, found in Homo sapiens (Human).